The sequence spans 122 residues: uncharacterized protein (122 aa).

This is an uncharacterized protein from Acidianus sp. F28 (AFV-2).